The sequence spans 85 residues: UPF0297 protein LBUL_1485 (85 aa).

Belongs to the UPF0297 family.

This Lactobacillus delbrueckii subsp. bulgaricus (strain ATCC BAA-365 / Lb-18) protein is UPF0297 protein LBUL_1485.